The sequence spans 258 residues: Snake venom serine protease 3 (258 aa).

The signal sequence occupies residues 1-18; that stretch reads MVLIRVLANLLILQLSYA. The propeptide occupies 19–24; the sequence is QKSSEL. The Peptidase S1 domain occupies 25 to 249; the sequence is VIGGDECNIN…YTDWIQSIIA (225 aa). 6 disulfide bridges follow: cysteine 31–cysteine 163, cysteine 50–cysteine 66, cysteine 98–cysteine 256, cysteine 142–cysteine 210, cysteine 174–cysteine 189, and cysteine 200–cysteine 225. The N-linked (GlcNAc...) asparagine glycan is linked to asparagine 44. The active-site Charge relay system is the histidine 65. N-linked (GlcNAc...) asparagine glycosylation is present at asparagine 103. Catalysis depends on aspartate 110, which acts as the Charge relay system. Asparagine 117, asparagine 121, and asparagine 154 each carry an N-linked (GlcNAc...) asparagine glycan. Serine 204 serves as the catalytic Charge relay system. N-linked (GlcNAc...) asparagine glycosylation occurs at asparagine 251.

This sequence belongs to the peptidase S1 family. Snake venom subfamily. Monomer. In terms of tissue distribution, expressed by the venom gland.

It is found in the secreted. Snake venom serine protease that may act in the hemostasis system of the prey. This Craspedocephalus gramineus (Bamboo pit viper) protein is Snake venom serine protease 3 (TLG3).